Here is a 2222-residue protein sequence, read N- to C-terminus: Protein SWEETIE (2222 aa).

HEAT repeat units lie at residues 37–75 (LLCFEILSDLISAIDEEPKESLLVTQRKCEDALYSLVTL), 228–265 (SEFDTLASYCVKGIEDSESSVRDAFAEALGSLLALGMH), 331–368 (SELQDYSLPIMDMLRGDSSIDAHALACVLYILRVGVID), 510–540 (PARLPRSVLEVSKKMLTESRRNVTVASSEKE), 541–578 (AGWLLLSSLLNSMPKEEFGDQDFDILILWTDVFAGNPE), 611–648 (CNDGILLQPVLANLRSALSCVSTMANKRFSDVKTLVDI), 768–807 (QGMLSLLSVIQQCLKAGKKQQWRTASLTNICAGLLAGLKA), 898–936 (MALSSLVPATVNSVSSLTKTSVLGLKIWALHGLLLTIEA), 968–1008 (QGIG…WQEI), and 1029–1066 (VSVHIHVKNLLMTLASRQPIIRRLSVSTLRHLVEKDPV). Residues 1133-1165 (IAENDPAYTRENLGDDDEDMVSSSSGKSIRANP) are disordered. HEAT repeat units lie at residues 1238 to 1269 (MRPIGVGLLSTILEKFKLVADPELPGHLLLEQ), 1270 to 1306 (YQAQLLSAVRTALDANSGPVLLEAGLQLATKIMTSGI), 1312 to 1354 (VAVK…AHAS), 1372 to 1410 (VEFEALLPMFSKSSDLLGRYWIQVLKGYSYICLCQNLKK), 1434 to 1474 (EAWP…LEAE), 1550 to 1586 (DLCQELLQVLSYSFHMDSSWDILAVSVVQQISQNCPK), 1783 to 1820 (VMLKSCQISIAAVVKDSNVQVQATVLQVLKSLVQRYNN), 1836 to 1874 (GDIVSLMQRALLKPVNTESVVIAGECLRFIMLLQTHSIT), 1880 to 1917 (GFMSLFLEVVLVVFSKTSDGVSQEVLELRNVAVRLVSH), and 1966 to 2006 (AMDI…QVST). A disordered region spans residues 1992-2203 (EALSTMPTSF…DESSKEHVGA (212 aa)). Residues 1996-2009 (TMPTSFNQVSTVES) show a composition bias toward polar residues. Residues 2010-2027 (GTDEEEEEEEDDDDDDWD) are compositionally biased toward acidic residues. Over residues 2028–2040 (TFQSFPASTNLEG) the composition is skewed to polar residues. The span at 2062–2072 (QDDESNAEETD) shows a compositional bias: acidic residues. Composition is skewed to basic and acidic residues over residues 2073–2096 (DQHLASDHATDITREDSNDKSKEV) and 2108–2124 (TREDSVDKSKEVEEETV). The segment covering 2150 to 2164 (NEQSVESKNLESENI) has biased composition (polar residues). A compositionally biased stretch (basic and acidic residues) spans 2191–2202 (SPEDESSKEHVG).

It belongs to the HEATR5 family.

May regulate multiple metabolic, hormonal and stress-related pathways. Required for carbohydrate metabolism and homoeostasis. May also monitor ethylene biosynthesis and senescence. The protein is Protein SWEETIE of Arabidopsis thaliana (Mouse-ear cress).